The chain runs to 64 residues: Disintegrin VLO5A (64 aa).

The region spanning 1 to 64 (NSGNPCCDPV…SDCPRNPYKD (64 aa)) is the Disintegrin domain. 4 disulfides stabilise this stretch: Cys6/Cys29, Cys20/Cys26, Cys25/Cys50, and Cys38/Cys57. Residues 42–44 (VGD) carry the Cell attachment site; atypical (VGD) motif.

It belongs to the venom metalloproteinase (M12B) family. P-II subfamily. P-IIe sub-subfamily. As to quaternary structure, heterodimer with VLO5B; disulfide-linked. In terms of tissue distribution, expressed by the venom gland.

Its subcellular location is the secreted. In terms of biological role, poor inhibitor of platelet aggregation. The disintegrin inhibits the adhesion of the alpha-4/beta-1 (ITGA4/ITGB1) integrin to VCAM-1. Inhibition on alpha-IIb/beta-3 (ITGA2B/ITGB3) is low. This is Disintegrin VLO5A from Macrovipera lebetina obtusa (Levant blunt-nosed viper).